The primary structure comprises 323 residues: ATP synthase gamma chain (323 aa).

Residues P215–A237 are disordered. The span at K221 to G230 shows a compositional bias: basic and acidic residues.

The protein belongs to the ATPase gamma chain family. F-type ATPases have 2 components, CF(1) - the catalytic core - and CF(0) - the membrane proton channel. CF(1) has five subunits: alpha(3), beta(3), gamma(1), delta(1), epsilon(1). CF(0) has three main subunits: a, b and c.

The protein resides in the cell inner membrane. Its function is as follows. Produces ATP from ADP in the presence of a proton gradient across the membrane. The gamma chain is believed to be important in regulating ATPase activity and the flow of protons through the CF(0) complex. The chain is ATP synthase gamma chain from Sorangium cellulosum (strain So ce56) (Polyangium cellulosum (strain So ce56)).